Reading from the N-terminus, the 953-residue chain is Pyruvate, phosphate dikinase, chloroplastic (953 aa).

Residues 1 to 77 (MMSSLSVEGM…VLNPVSPPVT (77 aa)) constitute a chloroplast transit peptide. The disordered stretch occupies residues 55–74 (PELRSSGLTPPRAVLNPVSP). T533 carries the post-translational modification Phosphothreonine; by PDRP1. H535 serves as the catalytic Tele-phosphohistidine intermediate. Residues R641, R698, E827, G848, T849, N850, and D851 each coordinate substrate. E827 is a binding site for Mg(2+). D851 provides a ligand contact to Mg(2+). C913 functions as the Proton donor in the catalytic mechanism.

The protein belongs to the PEP-utilizing enzyme family. In terms of assembly, homotetramer. Mg(2+) serves as cofactor. Phosphorylation of Thr-533 in the dark inactivates the enzyme. Dephosphorylation upon light stimulation reactivates the enzyme.

It is found in the plastid. The protein localises to the chloroplast. It carries out the reaction pyruvate + phosphate + ATP = phosphoenolpyruvate + AMP + diphosphate + H(+). Its pathway is photosynthesis; C4 acid pathway. Its activity is regulated as follows. Activated by light-induced dephosphorylation. Inhibited by dark-induced phosphorylation. Both reactions are catalyzed by PDRP1. Inactivated by cold due to the dissociation of the homotetramer. Functionally, formation of phosphoenolpyruvate, which is the primary acceptor of CO(2) in C4 and some Crassulacean acid metabolism plants. This is Pyruvate, phosphate dikinase, chloroplastic from Flaveria bidentis (Coastal plain yellowtops).